A 435-amino-acid polypeptide reads, in one-letter code: Mitogen-activated protein kinase HOG1 (435 aa).

At threonine 2 the chain carries N-acetylthreonine. The region spanning 23–302 (YNDLNPVGMG…AADALAHPYS (280 aa)) is the Protein kinase domain. ATP is bound by residues 29–37 (VGMGAFGLV) and lysine 52. Residue aspartate 144 is the Proton acceptor of the active site. Residues cysteine 156 and cysteine 161 each contribute to the arsenite site. Threonine 174 is modified (phosphothreonine; by PBS2). Positions 174–176 (TGY) match the TXY motif. Tyrosine 176 bears the Phosphotyrosine; by PBS2 mark. Residue cysteine 205 coordinates arsenite.

It belongs to the protein kinase superfamily. Ser/Thr protein kinase family. MAP kinase subfamily. HOG1 sub-subfamily. In terms of assembly, interacts with CDC37, HOT1, KIN28, PTP2, PTP3, RBP1, RCK2, RPD3, SIC1, SMP1 and SIN4. Requires Mg(2+) as cofactor. Post-translationally, activated by PBS2-mediated concomitant phosphorylation at Thr-174 and Tyr-176. Dually phosphorylated on Thr-174 and Tyr-176, which activates the enzyme.

The protein localises to the cytoplasm. The protein resides in the nucleus. The catalysed reaction is L-seryl-[protein] + ATP = O-phospho-L-seryl-[protein] + ADP + H(+). The enzyme catalyses L-threonyl-[protein] + ATP = O-phospho-L-threonyl-[protein] + ADP + H(+). With respect to regulation, activated by tyrosine and threonine phosphorylation. Inactivated by dephosphorylation via recruitment of PTC1 to the PBS2-HOG1 complex after adaptation to osmotic stress. PTP2 and PTP3 inactivate HOG1 by dephosphorylating Tyr-176, while the PP2Cs PTC1 and PTC2 or PTC3 dephosphorylate Thr-174 in the activation loop. Proline-directed serine/threonine-protein kinase involved in a signal transduction pathway that is activated by changes in the osmolarity of the extracellular environment. Controls osmotic regulation of transcription via the stress response element (STRE) in promoters of target genes. Upon osmotic shock, associates with the SKO1-SSN6-TUP1 complex, phosphorylates SKO1, and converts it into an activator that subsequently recruits Swi/Snf and SAGA complexes. Activates the SMP1 transcription factor and the RCK2 kinase, both also involved in the regulation of the expression of a subset of osmotic stress-related genes. Phosphorylation of HSL1 by HOG1 leads to a G2 arrest essential for cell survival at high osmolarity. Also mediates cell-cycle arrest in G1 phase by the dual targeting of SIC1. Phosphorylates methyltransferase DOT1 at least on 'Ser-565' and 'Thr-576'. Regulates MFA2 ARE-mediated translation in response to carbon source. Targets RPD3 histone deacetylase to osmoresponsive promoters to induce gene expression on stress. Required for the Golgi apparatus localization of MNN1. Plays an essential role in maintaining water homeostasis, arsenite detoxification, copper-resistance, cold-resistance, hydrogen peroxide response, adaptation to citric acid stress, and repression of the mating pathway activity. Functions as an arsenic sensor and effector via direct binding to arsenic and subsequent phosphorylation of the ARR1 transcription factor. The sequence is that of Mitogen-activated protein kinase HOG1 (HOG1) from Saccharomyces cerevisiae (strain ATCC 204508 / S288c) (Baker's yeast).